The following is a 23-amino-acid chain: Chaperonin GroEL (23 aa).

The protein belongs to the chaperonin (HSP60) family. In terms of assembly, forms a cylinder of 14 subunits composed of two heptameric rings stacked back-to-back. Interacts with the co-chaperonin GroES. Post-translationally, phosphorylated on threonine.

It localises to the cytoplasm. The enzyme catalyses ATP + H2O + a folded polypeptide = ADP + phosphate + an unfolded polypeptide.. Its function is as follows. Together with its co-chaperonin GroES, plays an essential role in assisting protein folding. The GroEL-GroES system forms a nano-cage that allows encapsulation of the non-native substrate proteins and provides a physical environment optimized to promote and accelerate protein folding. In Acidithiobacillus ferrooxidans (Thiobacillus ferrooxidans), this protein is Chaperonin GroEL.